Consider the following 374-residue polypeptide: MPNSGGEAPEMTVPAPIAMLAELTHRCPLACPYCSNPLALHGKARELDTQTWARAFDEAAALGVLQLHLSGGEPASRPDLVELTRAAHEAGLYTNLITSGIGLTPARLDALEAVGLDHIQLSLQGTTPDLADRIGGYKGGFARKMAVAAEIKARGIPLTLNAVMHRHNLDDLERTIELAIELGARRLEVACVQFHGWATRNRAALLPSRAQTEAAKRIVAEAEARLRGTLAFDFVPPDYYADYPKACMGGWGSAGLNIAPDGTVLPCHAAETIPHLSFDRFPDKTLREIWYEGAAFNAYRGTDHLPETCRSCDRVNIDFGGCRCQALALAGDPAATDPVCSRSPDHHKVTALLEAALAGGDGAEFTYRRMPRKG.

The 218-residue stretch at 13–230 folds into the Radical SAM core domain; sequence VPAPIAMLAE…EAEARLRGTL (218 aa). [4Fe-4S] cluster is bound by residues Cys-27, Cys-31, and Cys-34.

It belongs to the radical SAM superfamily. PqqE family. Interacts with PqqD. The interaction is necessary for activity of PqqE. The cofactor is [4Fe-4S] cluster.

The catalysed reaction is [PQQ precursor protein] + S-adenosyl-L-methionine = E-Y cross-linked-[PQQ precursor protein] + 5'-deoxyadenosine + L-methionine + H(+). Its pathway is cofactor biosynthesis; pyrroloquinoline quinone biosynthesis. Catalyzes the cross-linking of a glutamate residue and a tyrosine residue in the PqqA protein as part of the biosynthesis of pyrroloquinoline quinone (PQQ). The chain is PqqA peptide cyclase from Ruegeria pomeroyi (strain ATCC 700808 / DSM 15171 / DSS-3) (Silicibacter pomeroyi).